A 629-amino-acid chain; its full sequence is Dual specificity tyrosine-phosphorylation-regulated kinase 1B (629 aa).

The residue at position 63 (Y63) is a Phosphotyrosine. Residues K67–K86 form a disordered region. The Bipartite nuclear localization signal motif lies at R69–K86. A phosphotyrosine mark is found at Y92 and Y111. Residues Y111–F431 enclose the Protein kinase domain. An ATP-binding site is contributed by I117 to V125. Y129 is modified (phosphotyrosine). An ATP-binding site is contributed by K140. Y171 bears the Phosphotyrosine mark. F190–L193 contacts ATP. The active-site Proton acceptor is the D239. Position 262 is a phosphoserine (S262). At Y271 the chain carries Phosphotyrosine; by autocatalysis. Y273 bears the Phosphotyrosine mark. Residues G380–A399 form a disordered region. At Y401 the chain carries Phosphotyrosine. Disordered regions lie at residues D436–N480 and P496–S629. Residues A438–S477 are compositionally biased toward low complexity. Residues N480–D520 form an interaction with RANBP9 region. Composition is skewed to pro residues over residues P552–E562 and D574–Q585. S624 bears the Phosphoserine mark.

Belongs to the protein kinase superfamily. CMGC Ser/Thr protein kinase family. MNB/DYRK subfamily. As to quaternary structure, dimer. Interacts with DCOHM, MAP2K3/MKK3, RANBP9 and TCF1/HNF1A. Part of a complex consisting of RANBP9, RAN, DYRK1B and COPS5. Interacts with DCAF7. Interacts with RNF169. Phosphorylated by MAP kinase. Tyrosine phosphorylation may be required for dimerization. As to expression, isoform 1 and isoform 2 are broadly expressed. Isoform 3 seems specific for skeletal muscle (at protein level).

It localises to the nucleus. The protein resides in the nucleolus. It is found in the chromosome. The catalysed reaction is L-seryl-[protein] + ATP = O-phospho-L-seryl-[protein] + ADP + H(+). It catalyses the reaction L-threonyl-[protein] + ATP = O-phospho-L-threonyl-[protein] + ADP + H(+). The enzyme catalyses L-tyrosyl-[protein] + ATP = O-phospho-L-tyrosyl-[protein] + ADP + H(+). Its activity is regulated as follows. Inhibited by RANBP9. Dual-specificity kinase which possesses both serine/threonine and tyrosine kinase activities. Plays an essential role in ribosomal DNA (rDNA) double-strand break repair and rDNA copy number maintenance. During DNA damage, mediates transcription silencing in part via phosphorylating and enforcing DSB accumulation of the histone methyltransferase EHMT2. Enhances the transcriptional activity of TCF1/HNF1A and FOXO1. Inhibits epithelial cell migration. Mediates colon carcinoma cell survival in mitogen-poor environments. Inhibits the SHH and WNT1 pathways, thereby enhancing adipogenesis. In addition, promotes expression of the gluconeogenic enzyme glucose-6-phosphatase catalytic subunit 1 (G6PC1). In Mus musculus (Mouse), this protein is Dual specificity tyrosine-phosphorylation-regulated kinase 1B (Dyrk1b).